The sequence spans 116 residues: MTDQADAAMPIKFTDAAAAKVKGLLEEEQNPALKLRVYVTGGGCSGFQYGFTFDEKVNEGDFTVEKQGVQLVVDPMSLQYLVGGEVDYTSGLEGSRFFVKNPNATTTCGCGASFSV.

Iron-sulfur cluster-binding residues include Cys44, Cys108, and Cys110.

It belongs to the HesB/IscA family. Homodimer. Iron-sulfur cluster is required as a cofactor.

In terms of biological role, required for insertion of 4Fe-4S clusters for at least IspG. The protein is Iron-sulfur cluster insertion protein ErpA of Shewanella sp. (strain ANA-3).